Reading from the N-terminus, the 568-residue chain is Putative U-box domain-containing protein 55 (568 aa).

Residues 217 to 464 (QSESDRNDQL…KVAAEKDAAS (248 aa)) are a coiled coil. The region spanning 496-568 (QPPSYFICPI…AIQEWLQRNS (73 aa)) is the U-box domain.

It carries out the reaction S-ubiquitinyl-[E2 ubiquitin-conjugating enzyme]-L-cysteine + [acceptor protein]-L-lysine = [E2 ubiquitin-conjugating enzyme]-L-cysteine + N(6)-ubiquitinyl-[acceptor protein]-L-lysine.. It functions in the pathway protein modification; protein ubiquitination. Functionally, functions as an E3 ubiquitin ligase. The polypeptide is Putative U-box domain-containing protein 55 (PUB55) (Arabidopsis thaliana (Mouse-ear cress)).